The sequence spans 153 residues: Interleukin-4 (153 aa).

The first 24 residues, 1–24, serve as a signal peptide directing secretion; the sequence is MGLTSQLLPPLFFLLACAGNFVHG. 3 cysteine pairs are disulfide-bonded: Cys27–Cys151, Cys48–Cys89, and Cys70–Cys123. Asn62 carries N-linked (GlcNAc...) asparagine glycosylation.

It belongs to the IL-4/IL-13 family. As to quaternary structure, interacts with IL4R. Interacts with IL13RA1.

It is found in the secreted. Functionally, cytokine secreted primarily by mast cells, T-cells, eosinophils, and basophils that plays a role in regulating antibody production, hematopoiesis and inflammation, and the development of effector T-cell responses. Induces the expression of class II MHC molecules on resting B-cells. Enhances both secretion and cell surface expression of IgE and IgG1. Also regulates the expression of the low affinity Fc receptor for IgE (CD23) on both lymphocytes and monocytes. Positively regulates IL31RA expression in macrophages. Stimulates autophagy in dendritic cells by interfering with mTORC1 signaling and through the induction of RUFY4. In addition, plays a critical role in higher functions of the normal brain, such as memory and learning. Upon binding to IL4, IL4R receptor dimerizes either with the common IL2R gamma chain/IL2RG to produce the type 1 signaling complex, located mainly on hematopoietic cells, or with the IL13RA1 to produce the type 2 complex, which is also expressed on nonhematopoietic cells. Engagement of both types of receptors initiates JAK3 and to a lower extend JAK1 phosphorylation leading to activation of the signal transducer and activator of transcription 6/STAT6. The sequence is that of Interleukin-4 (IL4) from Homo sapiens (Human).